Consider the following 843-residue polypeptide: Neuroligin-1 (843 aa).

The first 45 residues, 1–45 (MALPRCMWPNYVWRAMMACVVHRGSGAPLTLCLLGCLLQTFHVLS), serve as a signal peptide directing secretion. Topologically, residues 46-697 (QKLDDVDPLV…DQRDYSTELS (652 aa)) are extracellular. Asn-109 carries N-linked (GlcNAc...) (complex) asparagine glycosylation. 2 cysteine pairs are disulfide-bonded: Cys-117-Cys-153 and Cys-172-Cys-181. N-linked (GlcNAc...) (complex) asparagine glycans are attached at residues Asn-303 and Asn-343. 2 disulfides stabilise this stretch: Cys-342–Cys-353 and Cys-512–Cys-546. Asn-547 carries N-linked (GlcNAc...) asparagine glycosylation. The tract at residues 647–688 (TKVPSTDITLRPTRKNSTPVTSAFPTAKQDDPKQQPSPFSVD) is disordered. A compositionally biased stretch (polar residues) spans 661-670 (KNSTPVTSAF). O-linked (GalNAc...) serine glycans are attached at residues Ser-683 and Ser-686. A helical membrane pass occupies residues 698–718 (VTIAVGASLLFLNILAFAALY). Residues 719–843 (YKKDKRRHDV…HPHSHSTTRV (125 aa)) lie on the Cytoplasmic side of the membrane. A disordered region spans residues 822–843 (GGQNNTLPHPHPHPHSHSTTRV). The span at 831 to 843 (PHPHPHSHSTTRV) shows a compositional bias: basic residues.

The protein belongs to the type-B carboxylesterase/lipase family. Interacts with neurexins NRXN1, NRXN2 and NRXN3. Interaction with neurexins is mediated by heparan sulfate glycan modification on neurexin. Interacts with NLGN3. Interacts (via its C-terminus) with DLG4/PSD-95 (via PDZ domain 3). Interacts with GOPC. Interacts with AIP1 and PDZRN3. The N-terminus is blocked. In terms of tissue distribution, expressed in brain, almost exclusively in neurons, and spinal cord. Detected in pancreas islet beta cells.

It localises to the cell membrane. The protein resides in the postsynaptic density. Its subcellular location is the synaptic cleft. The protein localises to the synaptic cell membrane. Functionally, cell surface protein involved in cell-cell-interactions via its interactions with neurexin family members. Plays a role in synapse function and synaptic signal transmission, and probably mediates its effects by recruiting and clustering other synaptic proteins. May promote the initial formation of synapses, but is not essential for this. In vitro, triggers the de novo formation of presynaptic structures. May be involved in specification of excitatory synapses. Required to maintain wakefulness quality and normal synchrony of cerebral cortex activity during wakefulness and sleep. The protein is involved in nervous system development. The polypeptide is Neuroligin-1 (Nlgn1) (Rattus norvegicus (Rat)).